The following is a 138-amino-acid chain: MRTLWIMAVLLVGVEGNLLQFNKMIKIMTKKNGFPFYTSYGCYCGWGGRGKPKDATDRCCFVHDCCYEKLTDCSPKSDIYSYSWKTGVIICGEGTECEKQICECDRAAAVCFGQNLRTYKKKYMFYPDFLCTDPTEKC.

Positions 1–16 are cleaved as a signal peptide; the sequence is MRTLWIMAVLLVGVEG. 7 disulfides stabilise this stretch: Cys42–Cys131, Cys44–Cys60, Cys59–Cys111, Cys65–Cys138, Cys66–Cys104, Cys73–Cys97, and Cys91–Cys102. The Ca(2+) site is built by Tyr43, Gly45, and Gly47. His63 is an active-site residue. Asp64 provides a ligand contact to Ca(2+). Asp105 is a catalytic residue.

It belongs to the phospholipase A2 family. Group II subfamily. D49 sub-subfamily. Ca(2+) is required as a cofactor. As to expression, expressed by the venom gland.

It is found in the secreted. The catalysed reaction is a 1,2-diacyl-sn-glycero-3-phosphocholine + H2O = a 1-acyl-sn-glycero-3-phosphocholine + a fatty acid + H(+). Functionally, snake venom phospholipase A2 (PLA2) that displays edema-inducing activities, as well as presynaptic neurotoxicity and myotoxicity. PLA2 catalyzes the calcium-dependent hydrolysis of the 2-acyl groups in 3-sn-phosphoglycerides. This is Basic phospholipase A2 PLA-N from Protobothrops flavoviridis (Habu).